The following is a 387-amino-acid chain: Phosphoglycerate kinase (387 aa).

Substrate is bound by residues 21–23 (DLN), R36, 59–62 (HLGR), R113, and R146. ATP is bound by residues K197, E314, and 340–343 (GGDT).

It belongs to the phosphoglycerate kinase family. In terms of assembly, monomer.

The protein resides in the cytoplasm. The catalysed reaction is (2R)-3-phosphoglycerate + ATP = (2R)-3-phospho-glyceroyl phosphate + ADP. It participates in carbohydrate degradation; glycolysis; pyruvate from D-glyceraldehyde 3-phosphate: step 2/5. The sequence is that of Phosphoglycerate kinase from Pseudomonas fluorescens (strain Pf0-1).